The primary structure comprises 464 residues: Fumarate hydratase class II (464 aa).

Substrate is bound by residues 98-100 (SGT), 129-132 (HPND), 139-141 (SSN), and Thr187. The Proton donor/acceptor role is filled by His188. The active site involves Ser318. Residues Ser319 and 324-326 (KVN) contribute to the substrate site.

The protein belongs to the class-II fumarase/aspartase family. Fumarase subfamily. Homotetramer.

The protein localises to the cytoplasm. It catalyses the reaction (S)-malate = fumarate + H2O. It participates in carbohydrate metabolism; tricarboxylic acid cycle; (S)-malate from fumarate: step 1/1. Functionally, involved in the TCA cycle. Catalyzes the stereospecific interconversion of fumarate to L-malate. The protein is Fumarate hydratase class II of Haemophilus influenzae (strain ATCC 51907 / DSM 11121 / KW20 / Rd).